The chain runs to 83 residues: Sulfur carrier protein TusA (83 aa).

The active-site Cysteine persulfide intermediate is the Cys19.

It belongs to the sulfur carrier protein TusA family.

Its subcellular location is the cytoplasm. Its function is as follows. Sulfur carrier protein which probably makes part of a sulfur-relay system. The polypeptide is Sulfur carrier protein TusA (Aliivibrio salmonicida (strain LFI1238) (Vibrio salmonicida (strain LFI1238))).